The primary structure comprises 743 residues: NAD(P)H-quinone oxidoreductase subunit 5, chloroplastic (743 aa).

The next 14 helical transmembrane spans lie at Trp-9–Phe-29, Trp-40–Ile-60, Ile-89–Ile-109, Phe-125–Ile-145, Ile-147–Thr-167, Ile-184–Glu-204, Asn-219–Ala-239, Thr-258–Ala-278, Leu-280–Ile-300, Thr-396–Ser-416, Trp-425–Tyr-445, Leu-548–Phe-568, Ile-607–Val-627, and Tyr-723–Leu-743.

The protein belongs to the complex I subunit 5 family. As to quaternary structure, NDH is composed of at least 16 different subunits, 5 of which are encoded in the nucleus.

It is found in the plastid. Its subcellular location is the chloroplast thylakoid membrane. The catalysed reaction is a plastoquinone + NADH + (n+1) H(+)(in) = a plastoquinol + NAD(+) + n H(+)(out). It catalyses the reaction a plastoquinone + NADPH + (n+1) H(+)(in) = a plastoquinol + NADP(+) + n H(+)(out). Functionally, NDH shuttles electrons from NAD(P)H:plastoquinone, via FMN and iron-sulfur (Fe-S) centers, to quinones in the photosynthetic chain and possibly in a chloroplast respiratory chain. The immediate electron acceptor for the enzyme in this species is believed to be plastoquinone. Couples the redox reaction to proton translocation, and thus conserves the redox energy in a proton gradient. The polypeptide is NAD(P)H-quinone oxidoreductase subunit 5, chloroplastic (ndhF) (Carpenteria californica (Tree anemone)).